The primary structure comprises 753 residues: Probable TonB-dependent siderophore receptor PiuA (753 aa).

The first 35 residues, 1-35 (MSRQSTDTAVSSQRLLASAIGVAITAIAAPQAAQA), serve as a signal peptide directing secretion. Residues 79-185 (PLLDTPKTVT…TGGSLNLISK (107 aa)) enclose the TBDR plug domain. One can recognise a TBDR beta-barrel domain in the interval 190–753 (DNFTDAGFTW…TALLGVNFHF (564 aa)). A disulfide bond links cysteine 420 and cysteine 430.

It belongs to the TonB-dependent receptor family.

It is found in the cell outer membrane. Functionally, involved in the initial step of iron uptake by binding iron chelating siderophores, thereby allowing extraction of iron from the environment. Probably involved in the transport of siderophores, including host catecholamines such as dopamine. The polypeptide is Probable TonB-dependent siderophore receptor PiuA (Pseudomonas aeruginosa (strain ATCC 15692 / DSM 22644 / CIP 104116 / JCM 14847 / LMG 12228 / 1C / PRS 101 / PAO1)).